The following is a 257-amino-acid chain: Neurotrophin-3 (257 aa).

Residues 1–18 (MSILFYVIFLAYLRGIQS) form the signal peptide. A propeptide spanning residues 19–138 (TNMDQRSLPE…VLNRTSRRKR (120 aa)) is cleaved from the precursor. N131 carries N-linked (GlcNAc...) asparagine glycosylation. 3 disulfides stabilise this stretch: C152-C217, C195-C246, and C205-C248.

The protein belongs to the NGF-beta family. In terms of tissue distribution, in the embryo, the expression peak at E4.5 and decreases at later stages of development.

It is found in the secreted. In terms of biological role, seems to promote the survival of visceral and proprioceptive sensory neurons. This is Neurotrophin-3 (NTF3) from Gallus gallus (Chicken).